The sequence spans 104 residues: Fusaric acid biosynthesis protein 2 (104 aa).

The protein belongs to the YciI family.

It functions in the pathway mycotoxin biosynthesis. In terms of biological role, part of the gene cluster that mediates the biosynthesis of fusaric acid, a mycotoxin with low to moderate toxicity to animals and humans, but with high phytotoxic properties. L-aspartate is suggested as fusaric acid amino acid precursor that is activated and further processed to O-acetyl-L-homoserine by cluster enzymes aspartate kinase FUB3 and homoserine O-acetyltransferase FUB5, as well as enzymes of the primary metabolism. The polyketide synthase (PKS) FUB1 generates the triketide trans-2-hexenal which is presumptively released by the hydrolase FUB4 and linked to the NRPS-bound amino acid precursor by NAD(P)-dependent dehydrogenase FUB6. FUB1, FUB4, and the non-canonical NRPS Fub8 may form an enzyme complex. Further processing of the NRPS-bound intermediate might be carried out by FUB6 and the sulfhydrylase FUB7, enabling a spontaneous electrocyclization to close the carbon backbone of fusaric acid. Dihydrofusaric acid is likely to be released via reduction by the thioester reductase (TR) domain of FUB8 whereupon the final oxidation to fusaric acid may (also) be performed by the FMN-dependent dehydrogenase FUB9. The chain is Fusaric acid biosynthesis protein 2 from Gibberella moniliformis (strain M3125 / FGSC 7600) (Maize ear and stalk rot fungus).